Here is a 449-residue protein sequence, read N- to C-terminus: MREIVHIQAGQCGNQIGAKFWEVISDEHGIDPSGNYVGDSDLQLERISVYYNEASSHKYVPRAILVDLEPGTMDSVRSGAFGHLFRPDNFIFGQSGAGNNWAKGHYTEGAELVDSVLDVVRKECENCDCLQGFQLTHSLGGGTGSGMGTLLISKVREEYPDRIMNTFSVVPSPKVSDTVVEPYNATLSIHQLVENTDETYCIDNEALYDICFRTLKLATPTYGDLNHLVSATMSGVTTSLRFPGQLNADLRKLAVNMVPFPRLHFFMPGFAPLTRRGSQQYRALTVPELTQQMFDAKNMMAACDPRHGRYLTVATVFRGRMSMKEVDEQMLAIQSKNSSYFVEWIPNNVKVAVCDIPPRGLKMSSTFIGNSTAIQELFKRISEQFTAMFRRKAFLHWYTGEGMDEMEFTEAESNMNDLVSEYQQYQDATAEEEGEMYEDDEEESEQGAK.

An MREI motif motif is present at residues 1–4; the sequence is MREI. Glutamine 11, glutamate 69, serine 138, glycine 142, threonine 143, glycine 144, asparagine 204, and asparagine 226 together coordinate GTP. Residue glutamate 69 coordinates Mg(2+). A disordered region spans residues 421–449; that stretch reads EYQQYQDATAEEEGEMYEDDEEESEQGAK. A compositionally biased stretch (acidic residues) spans 429–449; sequence TAEEEGEMYEDDEEESEQGAK. Glutamate 438 carries the post-translational modification 5-glutamyl polyglutamate. Serine 444 carries the post-translational modification Phosphoserine.

The protein belongs to the tubulin family. As to quaternary structure, dimer of alpha and beta chains. A typical microtubule is a hollow water-filled tube with an outer diameter of 25 nm and an inner diameter of 15 nM. Alpha-beta heterodimers associate head-to-tail to form protofilaments running lengthwise along the microtubule wall with the beta-tubulin subunit facing the microtubule plus end conferring a structural polarity. Microtubules usually have 13 protofilaments but different protofilament numbers can be found in some organisms and specialized cells. The cofactor is Mg(2+). Post-translationally, some glutamate residues at the C-terminus are polyglycylated, resulting in polyglycine chains on the gamma-carboxyl group. Glycylation is mainly limited to tubulin incorporated into axonemes (cilia and flagella) whereas glutamylation is prevalent in neuronal cells, centrioles, axonemes, and the mitotic spindle. Both modifications can coexist on the same protein on adjacent residues, and lowering polyglycylation levels increases polyglutamylation, and reciprocally. The precise function of polyglycylation is still unclear. Some glutamate residues at the C-terminus are polyglutamylated, resulting in polyglutamate chains on the gamma-carboxyl group. Polyglutamylation plays a key role in microtubule severing by spastin (SPAST). SPAST preferentially recognizes and acts on microtubules decorated with short polyglutamate tails: severing activity by SPAST increases as the number of glutamates per tubulin rises from one to eight, but decreases beyond this glutamylation threshold. In terms of tissue distribution, neuron specific.

The protein resides in the cytoplasm. It is found in the cytoskeleton. Functionally, tubulin is the major constituent of microtubules, a cylinder consisting of laterally associated linear protofilaments composed of alpha- and beta-tubulin heterodimers. Microtubules grow by the addition of GTP-tubulin dimers to the microtubule end, where a stabilizing cap forms. Below the cap, tubulin dimers are in GDP-bound state, owing to GTPase activity of alpha-tubulin. This is Tubulin beta-4 chain from Gallus gallus (Chicken).